A 689-amino-acid chain; its full sequence is MTTQDFLLEIGCEELPPRRLNQLSQALSQTIKSELEKADLSFENIHRYATPRRLAVLVNNLALQQPQRKIERQGPSVKAAFDKDQTPTLACFGFAQSCGVSTAQLKVKKTKKGEFIYCEIEQPGQNTLDLLPNIIQSALKQLPTPKAMRWGDHKEFFVRPVHWIILMLGKDLVPATLLGKMASCETRGHRFHHPKNILVTKPDDYQKLLLTHGMVIADFEKRREKIRDLIQKAASEKGEAIIDEGLLEEVTGMVEWPVILVGNFKAEFLELPPEVLITTMKVHQRTFPIKNKNGDLLPYFIIVSNIESKNPKRVIVGNERVINARLADASFFYDNDLRTSLENRLPKLGDVIFQRQLGTLADKARRIEKLAAFIAKQINIDEQLAARAGLLSKCDLVSEMVYEFPTLQGIMGYYYAFHDKEPPLVAEAIKEHYLPRFSGDQLPRNLLSACVAVADRIDTIIGIIGINKSPTGDKDPFALRRAALGILRILIEKELSLDLFALLNEAKNNYAVELPNVNVANQSFDFIIERLRAWYLEKEVPASVFMAVLASHPADPLDFDRRIKAVQHFQTLPEADALAAANKRVSNILKKQAAELKSKTIDHSLFDSDAEHLLADQLKERAELVNNLYKKADYTKALSELASLKEPIDIFFDKVMVMVDDKEKRENRLALLSSLQQLFSQIADISLLS.

Belongs to the class-II aminoacyl-tRNA synthetase family. Tetramer of two alpha and two beta subunits.

It localises to the cytoplasm. The catalysed reaction is tRNA(Gly) + glycine + ATP = glycyl-tRNA(Gly) + AMP + diphosphate. The chain is Glycine--tRNA ligase beta subunit from Coxiella burnetii (strain Dugway 5J108-111).